The primary structure comprises 1088 residues: Protein argonaute 18 (1088 aa).

Residues 1-220 (MASRGGGQHQ…QPPPDLPQAP (220 aa)) form a disordered region. Composition is skewed to gly residues over residues 20–30 (GGYGRGGGGGR), 51–86 (YPGG…GQGR), 95–127 (GRGY…GGYH), 135–148 (GRGG…GGGY), 161–182 (ARGG…YGRG), and 191–206 (GRGG…GGGS). Positions 211-220 (QPPPDLPQAP) are enriched in pro residues. A PAZ domain is found at 477–574 (TVGYFLNNYG…LPMELCNIVP (98 aa)). A Piwi domain is found at 747–1056 (LLLVVMTDDK…LAFRARFYLT (310 aa)).

It belongs to the argonaute family. Ago subfamily.

In terms of biological role, probably involved in the RNA silencing pathway. May bind to short RNAs such as microRNAs (miRNAs) or short interfering RNAs (siRNAs), and represses the translation of mRNAs which are complementary to them. This Oryza sativa subsp. japonica (Rice) protein is Protein argonaute 18 (AGO18).